The sequence spans 506 residues: MANETVIQMIDVTKRFGDFVANDKVNLELKKGEIHALLGENGAGKSTLMNILSGLLEPSEGEVHVKGKLENIDSPSKAANLGIGMVHQHFMLVDAFTVTENIILGNEVTKGINLDLKTAKKKILELSERYGLSVEPDALIRDISVGQQQRVEILKTLYRGADILIFDEPTAVLTPAEITELMQIMKNLIKEGKSIILITHKLDEIRAVADRITVIRRGKSIDTVELGDKTNQELAELMVGRSVSFITEKAAAQPKDVVLEIKDLNIKESRGSLKVKGLSLDVRAGEIVGVAGIDGNGQTELVKAITGLTKVDSGSIKLHNKDITNQRPRKITEQSVGHVPEDRHRDGLVLEMTVAENIALQTYYKPPMSKYGFLDYNKINSHARELMEEFDVRGAGEWVSASSLSGGNQQKAIIAREIDRNPDLLIVSQPTRGLDVGAIEYIHKRLIQARDEGKAVLVISFELDEILNVSDRIAVIHDGQIQGIVSPETTTKQELGILMVGGNINE.

2 consecutive ABC transporter domains span residues 7 to 242 and 259 to 503; these read IQMI…VGRS and LEIK…VGGN. 39–46 provides a ligand contact to ATP; sequence GENGAGKS.

This sequence belongs to the ABC transporter superfamily. As to quaternary structure, the complex is composed of two ATP-binding proteins (NupA), two transmembrane proteins (NupB and NupC) and a solute-binding protein (BmpA).

The protein resides in the cell membrane. Functionally, part of an ABC transporter complex involved in the uptake of all common nucleosides. Responsible for energy coupling to the transport system. The polypeptide is Nucleoside import ATP-binding protein NupA (Lactococcus lactis subsp. cremoris (strain MG1363)).